The sequence spans 163 residues: Probable chemoreceptor glutamine deamidase CheD (163 aa).

This sequence belongs to the CheD family.

It catalyses the reaction L-glutaminyl-[protein] + H2O = L-glutamyl-[protein] + NH4(+). In terms of biological role, probably deamidates glutamine residues to glutamate on methyl-accepting chemotaxis receptors (MCPs), playing an important role in chemotaxis. This chain is Probable chemoreceptor glutamine deamidase CheD, found in Borreliella burgdorferi (strain ATCC 35210 / DSM 4680 / CIP 102532 / B31) (Borrelia burgdorferi).